The primary structure comprises 206 residues: ATP-dependent dethiobiotin synthetase BioD (206 aa).

12–17 (GVGKTI) is a binding site for ATP. T16 is a Mg(2+) binding site. The active site involves K32. Mg(2+) contacts are provided by H46 and E98. 98-101 (EGAG) provides a ligand contact to ATP.

The protein belongs to the dethiobiotin synthetase family. In terms of assembly, homodimer. Mg(2+) serves as cofactor.

It is found in the cytoplasm. It catalyses the reaction (7R,8S)-7,8-diammoniononanoate + CO2 + ATP = (4R,5S)-dethiobiotin + ADP + phosphate + 3 H(+). It functions in the pathway cofactor biosynthesis; biotin biosynthesis; biotin from 7,8-diaminononanoate: step 1/2. Its function is as follows. Catalyzes a mechanistically unusual reaction, the ATP-dependent insertion of CO2 between the N7 and N8 nitrogen atoms of 7,8-diaminopelargonic acid (DAPA, also called 7,8-diammoniononanoate) to form a ureido ring. This chain is ATP-dependent dethiobiotin synthetase BioD, found in Novosphingobium aromaticivorans (strain ATCC 700278 / DSM 12444 / CCUG 56034 / CIP 105152 / NBRC 16084 / F199).